Here is a 256-residue protein sequence, read N- to C-terminus: Ubiquinone/menaquinone biosynthesis C-methyltransferase UbiE (256 aa).

S-adenosyl-L-methionine contacts are provided by residues Thr79, Asp100, and 128–129 (DA).

Belongs to the class I-like SAM-binding methyltransferase superfamily. MenG/UbiE family.

The catalysed reaction is a 2-demethylmenaquinol + S-adenosyl-L-methionine = a menaquinol + S-adenosyl-L-homocysteine + H(+). It carries out the reaction a 2-methoxy-6-(all-trans-polyprenyl)benzene-1,4-diol + S-adenosyl-L-methionine = a 5-methoxy-2-methyl-3-(all-trans-polyprenyl)benzene-1,4-diol + S-adenosyl-L-homocysteine + H(+). It participates in quinol/quinone metabolism; menaquinone biosynthesis; menaquinol from 1,4-dihydroxy-2-naphthoate: step 2/2. The protein operates within cofactor biosynthesis; ubiquinone biosynthesis. In terms of biological role, methyltransferase required for the conversion of demethylmenaquinol (DMKH2) to menaquinol (MKH2) and the conversion of 2-polyprenyl-6-methoxy-1,4-benzoquinol (DDMQH2) to 2-polyprenyl-3-methyl-6-methoxy-1,4-benzoquinol (DMQH2). The chain is Ubiquinone/menaquinone biosynthesis C-methyltransferase UbiE from Pseudomonas fluorescens (strain Pf0-1).